The primary structure comprises 213 residues: MQAQIVNKIFEIFSKNNPSPKTELIYKNDFTLLVAVMLSAQATDISVNLATKSLFETYDTTEKILELGEDGLKKYIKSIGLFNSKAKNIIALCKILISNYQSSVPNDFKELIKLPGVGRKTANVVLNCLFGMPTMAVDTHVFRVAKRIGLARGNSPEIVEKELLQIINEKWLTHAHHWLILHGRYICKARKPDCDICPIKEYCEYYNSPIISK.

Positions 108–127 (FKELIKLPGVGRKTANVVLN) constitute a HhH domain. The [4Fe-4S] cluster site is built by Cys-187, Cys-194, Cys-197, and Cys-203.

The protein belongs to the Nth/MutY family. The cofactor is [4Fe-4S] cluster.

It carries out the reaction 2'-deoxyribonucleotide-(2'-deoxyribose 5'-phosphate)-2'-deoxyribonucleotide-DNA = a 3'-end 2'-deoxyribonucleotide-(2,3-dehydro-2,3-deoxyribose 5'-phosphate)-DNA + a 5'-end 5'-phospho-2'-deoxyribonucleoside-DNA + H(+). Functionally, DNA repair enzyme that has both DNA N-glycosylase activity and AP-lyase activity. The DNA N-glycosylase activity releases various damaged pyrimidines from DNA by cleaving the N-glycosidic bond, leaving an AP (apurinic/apyrimidinic) site. The AP-lyase activity cleaves the phosphodiester bond 3' to the AP site by a beta-elimination, leaving a 3'-terminal unsaturated sugar and a product with a terminal 5'-phosphate. The sequence is that of Endonuclease III from Rickettsia felis (strain ATCC VR-1525 / URRWXCal2) (Rickettsia azadi).